A 612-amino-acid polypeptide reads, in one-letter code: Transcription factor unc-37 (612 aa).

The disordered stretch occupies residues 143 to 228; the sequence is FASPHVNGGD…SNSRARQQQQ (86 aa). Positions 150-159 are enriched in gly residues; the sequence is GGDGAGGSSG. The tract at residues 153 to 196 is CCN domain; the sequence is GAGGSSGGASEAKKAKLEDPDDGELEIDVTNDDHPSTASNGGAA. Over residues 171 to 182 the composition is skewed to acidic residues; that stretch reads DPDDGELEIDVT. A compositionally biased stretch (polar residues) spans 202-221; the sequence is DSTNSVASSGASTPSIASNS. 6 WD repeats span residues 308–339, 372–402, 414–444, 456–486, 538–568, and 579–609; these read GIPT…RVYT, LKEN…ALWD, TDSQ…LIYD, GHQD…RCWD, QHES…NAWR, and KENS…TLYA.

Belongs to the WD repeat Groucho/TLE family. Interacts with unc-4. Interacts with ref-1. May interact with mls-1.

It is found in the nucleus. Functionally, transcriptional corepressor that functions with the neural specificity gene unc-4 to govern motor neuron identity. In concert with unc-4, represses the expression of VB-specific genes such as ceh-12, thereby preventing the adoption of VB motor neuron fate. May function with transcription factor mls-1 to promote uterine muscle specification and formation. This chain is Transcription factor unc-37 (unc-37), found in Caenorhabditis elegans.